A 252-amino-acid polypeptide reads, in one-letter code: Imidazole glycerol phosphate synthase subunit HisF (252 aa).

Active-site residues include aspartate 11 and aspartate 130.

This sequence belongs to the HisA/HisF family. Heterodimer of HisH and HisF.

The protein localises to the cytoplasm. It carries out the reaction 5-[(5-phospho-1-deoxy-D-ribulos-1-ylimino)methylamino]-1-(5-phospho-beta-D-ribosyl)imidazole-4-carboxamide + L-glutamine = D-erythro-1-(imidazol-4-yl)glycerol 3-phosphate + 5-amino-1-(5-phospho-beta-D-ribosyl)imidazole-4-carboxamide + L-glutamate + H(+). The protein operates within amino-acid biosynthesis; L-histidine biosynthesis; L-histidine from 5-phospho-alpha-D-ribose 1-diphosphate: step 5/9. In terms of biological role, IGPS catalyzes the conversion of PRFAR and glutamine to IGP, AICAR and glutamate. The HisF subunit catalyzes the cyclization activity that produces IGP and AICAR from PRFAR using the ammonia provided by the HisH subunit. The protein is Imidazole glycerol phosphate synthase subunit HisF of Hydrogenobaculum sp. (strain Y04AAS1).